A 307-amino-acid polypeptide reads, in one-letter code: Mitochondrial glycine transporter YMC1 (307 aa).

3 Solcar repeats span residues 26–106, 121–204, and 218–305; these read VKDL…MKRF, PQYY…LIAN, and PAWK…AMRL. 6 helical membrane passes run 29-49, 83-103, 118-138, 183-203, 223-243, and 277-298; these read LLAGTAGGIAQVLVGQPFDTT, LTPLIGVGACVSLQFGVNEAM, LSLPQYYACGVTGGIVNSFLA, TILREGHGCGTYFLVYEALIA, CIFGALSGTALWLMVYPLDVI, and FFKGFGPTMLRAAPANGATFAT.

It belongs to the mitochondrial carrier (TC 2.A.29) family.

Its subcellular location is the mitochondrion inner membrane. In terms of biological role, secondary mitochondrial glycine transporter required for the biosynthesis of heme at high glycine concentrations. Imports the precursor glycine into the mitochondrial matrix, where it is condensed with succinyl-CoA to produce 5-aminolevulinate (ALA), the first step of heme biosynthesis. The polypeptide is Mitochondrial glycine transporter YMC1 (Saccharomyces cerevisiae (strain ATCC 204508 / S288c) (Baker's yeast)).